A 430-amino-acid chain; its full sequence is Tektin-2 (430 aa).

2 coiled-coil regions span residues Lys-80–Leu-162 and Asn-225–Asn-382.

It belongs to the tektin family. As to quaternary structure, microtubule inner protein component of sperm flagellar doublet microtubules. May interact with CCDC172. In terms of processing, tyrosine phosphorylated. Ubiquitinated, leading to its degradation. Deubiquitinated by USP16, promoting its stability. In terms of tissue distribution, expressed at high levels in testis, trachea and fetal lung, and at lower levels in ovary, pituitary, adult lung, fetal brain and fetal kidney.

It is found in the cytoplasm. Its subcellular location is the cytoskeleton. The protein localises to the cilium axoneme. The protein resides in the flagellum axoneme. It localises to the microtubule organizing center. Microtubule inner protein (MIP) part of the dynein-decorated doublet microtubules (DMTs) in cilia and flagellar axoneme. Plays a key role in the assembly or attachment of the inner dynein arm to microtubules in sperm flagella and tracheal cilia. Forms filamentous polymers in the walls of ciliary and flagellar microtubules. The polypeptide is Tektin-2 (Homo sapiens (Human)).